A 122-amino-acid polypeptide reads, in one-letter code: MIQTQTRLAVADNSGAKELMCIKVLGGSGRKTANIGDVIVCSVKSATPGGVVKKGQVVKAVVVRTVSGVRRNDGSYIRFDENAAVVIKDDQSPRGTRIFGPVARELRDKDFMKIISLAPEVI.

This sequence belongs to the universal ribosomal protein uL14 family. In terms of assembly, part of the 50S ribosomal subunit. Forms a cluster with proteins L3 and L19. In the 70S ribosome, L14 and L19 interact and together make contacts with the 16S rRNA in bridges B5 and B8.

Functionally, binds to 23S rRNA. Forms part of two intersubunit bridges in the 70S ribosome. This Brevibacillus brevis (strain 47 / JCM 6285 / NBRC 100599) protein is Large ribosomal subunit protein uL14.